The primary structure comprises 244 residues: MSSEAERWLAAVVGNTHVRWGWFAGESLVKVEQFPAHQPLSWPEETELWLAAVGSAPLPPRSPWVHCLELSQVPLRDPYPSLGLDRALALWAAGIRYGWPCLVIDAGTALTLTGADAEGSLVGGAILPGLGLQAQALADHTARLPKVEWDPGAPIPPRWARNTGAAIRSGILHTLLAGLRDFLADWRRRFPQGPLLVTGGDGELLYPHLRPLDAELRWDPHLVLRGIAGCRQLHRVVRKPSGAE.

An ATP-binding site is contributed by 12 to 19 (VVGNTHVR). Substrate is bound by residues Tyr-79 and 83-86 (GLDR). The active-site Proton acceptor is the Asp-85. Asp-105 provides a ligand contact to K(+). Thr-108 contacts ATP. Residue Thr-163 participates in substrate binding.

The protein belongs to the type III pantothenate kinase family. Homodimer. The cofactor is NH4(+). K(+) serves as cofactor.

The protein resides in the cytoplasm. The enzyme catalyses (R)-pantothenate + ATP = (R)-4'-phosphopantothenate + ADP + H(+). It functions in the pathway cofactor biosynthesis; coenzyme A biosynthesis; CoA from (R)-pantothenate: step 1/5. Functionally, catalyzes the phosphorylation of pantothenate (Pan), the first step in CoA biosynthesis. This chain is Type III pantothenate kinase, found in Synechococcus sp. (strain JA-3-3Ab) (Cyanobacteria bacterium Yellowstone A-Prime).